The primary structure comprises 83 residues: MERYYHLCKNHQGKVVRITERGGRVHVGRITRVTRDRVFIAPVGGGPRGFGYGYWGGYWGYGAAYGISLGLIAGVALAGLFFW.

A helical transmembrane segment spans residues 58–80; sequence YWGYGAAYGISLGLIAGVALAGL.

It is found in the membrane. This is an uncharacterized protein from Bacillus subtilis (strain 168).